The following is a 274-amino-acid chain: 2,3,4,5-tetrahydropyridine-2,6-dicarboxylate N-succinyltransferase (274 aa).

Residues arginine 104 and aspartate 141 each coordinate substrate.

It belongs to the transferase hexapeptide repeat family. In terms of assembly, homotrimer.

It is found in the cytoplasm. The catalysed reaction is (S)-2,3,4,5-tetrahydrodipicolinate + succinyl-CoA + H2O = (S)-2-succinylamino-6-oxoheptanedioate + CoA. It functions in the pathway amino-acid biosynthesis; L-lysine biosynthesis via DAP pathway; LL-2,6-diaminopimelate from (S)-tetrahydrodipicolinate (succinylase route): step 1/3. The protein is 2,3,4,5-tetrahydropyridine-2,6-dicarboxylate N-succinyltransferase of Buchnera aphidicola subsp. Acyrthosiphon pisum (strain APS) (Acyrthosiphon pisum symbiotic bacterium).